The sequence spans 565 residues: 2-(3-amino-3-carboxypropyl)histidine synthase subunit 2 (565 aa).

3 residues coordinate [4Fe-4S] cluster: Cys-139, Cys-160, and Cys-377. Disordered regions lie at residues 424–458 and 464–483; these read QPAE…DLRT and HTRP…DDAV.

This sequence belongs to the DPH1/DPH2 family. DPH2 subfamily. In terms of assembly, component of the 2-(3-amino-3-carboxypropyl)histidine synthase complex composed of dph1, dph2, dph3 and a NADH-dependent reductase, predominantly cbr1. [4Fe-4S] cluster is required as a cofactor.

The protein resides in the cytoplasm. The protein operates within protein modification; peptidyl-diphthamide biosynthesis. Functionally, required for the first step of diphthamide biosynthesis, a post-translational modification of histidine which occurs in elongation factor 2. Dph1 and dph2 transfer a 3-amino-3-carboxypropyl (ACP) group from S-adenosyl-L-methionine (SAM) to a histidine residue, the reaction is assisted by a reduction system comprising dph3 and a NADH-dependent reductase, predominantly cbr1. Facilitates the reduction of the catalytic iron-sulfur cluster found in the dph1 subunit. This Aspergillus fumigatus (strain ATCC MYA-4609 / CBS 101355 / FGSC A1100 / Af293) (Neosartorya fumigata) protein is 2-(3-amino-3-carboxypropyl)histidine synthase subunit 2 (dph2).